A 554-amino-acid chain; its full sequence is 3-(3-hydroxy-phenyl)propionate/3-hydroxycinnamic acid hydroxylase (554 aa).

Residues 17–46 (QVAI…VVEK) and 285–295 (FRIDRVLLAGD) contribute to the FAD site.

The protein belongs to the PheA/TfdB FAD monooxygenase family. FAD is required as a cofactor.

It catalyses the reaction 3-(3-hydroxyphenyl)propanoate + NADH + O2 + H(+) = 3-(2,3-dihydroxyphenyl)propanoate + NAD(+) + H2O. The catalysed reaction is (2E)-3-(3-hydroxyphenyl)prop-2-enoate + NADH + O2 + H(+) = (2E)-3-(2,3-dihydroxyphenyl)prop-2-enoate + NAD(+) + H2O. It participates in aromatic compound metabolism; 3-phenylpropanoate degradation. Functionally, catalyzes the insertion of one atom of molecular oxygen into position 2 of the phenyl ring of 3-(3-hydroxyphenyl)propionate (3-HPP) and hydroxycinnamic acid (3HCI). The polypeptide is 3-(3-hydroxy-phenyl)propionate/3-hydroxycinnamic acid hydroxylase (Escherichia coli (strain K12 / DH10B)).